Here is a 791-residue protein sequence, read N- to C-terminus: MKLNHRILLLIAPVILLSAAASSYIIYTSQKNALLKRTDSYLQLNIEKLASHYRQAQSLVSSYAFTLAKSDIIRHYFSLEKNPYRELELVDNLRETLQILQPNEKQLVSLSILNGHEELLYYAENSSDPFAELDPKVMAYIKQRFASTQKNSDISYTVNSAGEDILVRYDMLDTQTLSTPLSYNRQDVFFVVVYVVLEQFSQLRKKIEFDNQSPIFFTHSPPSYRTGLLQSVELQPGFYAILDPAPKLINAQLHSIQRELLLSFGVSALVTVLMLLLLLYRHVINPILHLDKQLEEVENNQRKNIEKLNTDDEIGRLSSRFYAMYSELHSTYQRTKALAENDHLTKLANRYQFQVQADLLLSRCYDTQHIWVMYIDLDNFKYVNDKYGHQIGDSLLVSFATHVRQLCKNFEASHNTYSIAARLSGDEFAILLVSPKRFNDCAKIFAQRLLAPIQNKDNSPLSHFPITASIGIATFPKDGEHIEKLLLNADTAMYQAKNAGKNQVAYYSQALDQIVQRRNNIERALRLGLFDQEFNLAYQPYFTCSGKRLVGFEVLLRWQSELLGEVSPEEFIPIAEQTGLFGTIDRWVISKAFQEISTLQAIVKEPIQVSINLSSAELNSLKLAQFIHRQAEQFGVSPAWIDFEITETFAADSQSFPLLHELSRLGYGLTIDDFGSGYTSITQLVQYPVQKIKFDRHFLDTLIATNKQNVIRPLIDLCHSQSMKVTAEGIESETMHQWLADYECDYMQGFYFGYPMSLSEISPWLHASNHKKKSYAQDHYCFTEPSQSECR.

Positions 1–23 (MKLNHRILLLIAPVILLSAAASS) are cleaved as a signal peptide. The Periplasmic segment spans residues 24–259 (YIIYTSQKNA…NAQLHSIQRE (236 aa)). Residues 260-280 (LLLSFGVSALVTVLMLLLLLY) traverse the membrane as a helical segment. An HAMP domain is found at 281–333 (RHVINPILHLDKQLEEVENNQRKNIEKLNTDDEIGRLSSRFYAMYSELHSTYQ). The Cytoplasmic segment spans residues 281-791 (RHVINPILHL…FTEPSQSECR (511 aa)). The GGDEF domain maps to 368-509 (QHIWVMYIDL…GKNQVAYYSQ (142 aa)). Positions 518–769 (RNNIERALRL…EISPWLHASN (252 aa)) constitute an EAL domain.

It localises to the cell inner membrane. Functionally, plays an essential role in the maintenance and the formation of the three-dimensional structure of the biofilms at the later stages of their development. Absence of mbaA promotes the accumulation of larger amount of biomass on the surfaces at later stage of development, results in the overproduction of an extracellular polymeric substance that accumulates in the matrix of biofilms. This yields biofilms lacking the typical structure consisting of pillars of cells separated by fluid filled channels. The protein is Biofilm architecture maintenance protein MbaA (mbaA) of Vibrio cholerae serotype O1 (strain ATCC 39315 / El Tor Inaba N16961).